The sequence spans 286 residues: ATP-binding protein ChvD (286 aa).

The ABC transporter domain occupies 21–85 (KLQDMIDSQN…DLLLLDEPTN (65 aa)).

It belongs to the ABC transporter superfamily.

In terms of biological role, the induction of virG by growth under acidic conditions and by phosphate starvation, in the absence of plant inducers, is influenced by ChvD. This is ATP-binding protein ChvD (chvD) from Rhizobium radiobacter (Agrobacterium tumefaciens).